The following is a 220-amino-acid chain: Orotidine 5'-phosphate decarboxylase (220 aa).

Residues D12, K34, 60–69 (DFKVADIPNT), S117, 170–180 (PGVGAQGGKAS), G193, and R194 contribute to the substrate site. K62 serves as the catalytic Proton donor.

The protein belongs to the OMP decarboxylase family. Type 1 subfamily. As to quaternary structure, homodimer.

The enzyme catalyses orotidine 5'-phosphate + H(+) = UMP + CO2. It functions in the pathway pyrimidine metabolism; UMP biosynthesis via de novo pathway; UMP from orotate: step 2/2. Catalyzes the decarboxylation of orotidine 5'-monophosphate (OMP) to uridine 5'-monophosphate (UMP). This chain is Orotidine 5'-phosphate decarboxylase, found in Methanosarcina mazei (strain ATCC BAA-159 / DSM 3647 / Goe1 / Go1 / JCM 11833 / OCM 88) (Methanosarcina frisia).